The chain runs to 466 residues: Argininosuccinate lyase 1 (466 aa).

Belongs to the lyase 1 family. Argininosuccinate lyase subfamily.

The protein resides in the cytoplasm. It carries out the reaction 2-(N(omega)-L-arginino)succinate = fumarate + L-arginine. It participates in amino-acid biosynthesis; L-arginine biosynthesis; L-arginine from L-ornithine and carbamoyl phosphate: step 3/3. This Mesorhizobium japonicum (strain LMG 29417 / CECT 9101 / MAFF 303099) (Mesorhizobium loti (strain MAFF 303099)) protein is Argininosuccinate lyase 1.